Consider the following 500-residue polypeptide: V-type proton ATPase subunit B (500 aa).

It belongs to the ATPase alpha/beta chains family. As to quaternary structure, V-ATPase is a heteromultimeric enzyme composed of a peripheral catalytic V1 complex (main components: subunits A, B, C, D, E, and F) attached to an integral membrane V0 proton pore complex (main component: the proteolipid protein).

Functionally, non-catalytic subunit of the peripheral V1 complex of vacuolar ATPase. V-ATPase is responsible for acidifying a variety of intracellular compartments in eukaryotic cells. The protein is V-type proton ATPase subunit B of Cyanidium caldarium (Red alga).